Reading from the N-terminus, the 1342-residue chain is DNA-directed RNA polymerase subunit beta (1342 aa).

Belongs to the RNA polymerase beta chain family. The RNAP catalytic core consists of 2 alpha, 1 beta, 1 beta' and 1 omega subunit. When a sigma factor is associated with the core the holoenzyme is formed, which can initiate transcription.

It carries out the reaction RNA(n) + a ribonucleoside 5'-triphosphate = RNA(n+1) + diphosphate. Functionally, DNA-dependent RNA polymerase catalyzes the transcription of DNA into RNA using the four ribonucleoside triphosphates as substrates. This chain is DNA-directed RNA polymerase subunit beta, found in Blochmanniella floridana.